Consider the following 488-residue polypeptide: RuvB-like helicase 1 (488 aa).

Polar residues predominate over residues 1–11 (MATANTSSGSM). Residues 1–29 (MATANTSSGSMNGVGPVTMDSSTSGASRE) form a disordered region. Residue 87–94 (GGPGTGKT) coordinates ATP.

Belongs to the RuvB family. As to quaternary structure, may form heterododecamers with RVB2. Component of the SWR1 chromatin remodeling complex, the INO80 chromatin remodeling complex, and of the R2TP complex.

It is found in the nucleus. The catalysed reaction is ATP + H2O = ADP + phosphate + H(+). DNA helicase which participates in several chromatin remodeling complexes, including the SWR1 and the INO80 complexes. The SWR1 complex mediates the ATP-dependent exchange of histone H2A for the H2A variant HZT1 leading to transcriptional regulation of selected genes by chromatin remodeling. The INO80 complex remodels chromatin by shifting nucleosomes and is involved in DNA repair. Also involved in pre-rRNA processing. This is RuvB-like helicase 1 (RVB1) from Mycosarcoma maydis (Corn smut fungus).